A 522-amino-acid polypeptide reads, in one-letter code: Probable protein kinase UbiB (522 aa).

A Protein kinase domain is found at 119 to 496 (SFDADPVASA…QRRTNRLLLT (378 aa)). Residues 125–133 (VASASIAQV) and lysine 147 each bind ATP. Aspartate 282 functions as the Proton acceptor in the catalytic mechanism. Residues 494 to 514 (LLTVFYLIGGFVAGGLFAHWI) traverse the membrane as a helical segment.

The protein belongs to the ABC1 family. UbiB subfamily.

It localises to the cell inner membrane. It functions in the pathway cofactor biosynthesis; ubiquinone biosynthesis [regulation]. Is probably a protein kinase regulator of UbiI activity which is involved in aerobic coenzyme Q (ubiquinone) biosynthesis. This chain is Probable protein kinase UbiB, found in Leptothrix cholodnii (strain ATCC 51168 / LMG 8142 / SP-6) (Leptothrix discophora (strain SP-6)).